A 213-amino-acid polypeptide reads, in one-letter code: Virulence factor 1 (213 aa).

It localises to the host mitochondrion. Functionally, plays a role in antagonizing the host innate immune response. The polypeptide is Virulence factor 1 (Norovirus (isolate Mouse/NoV/United States/MNV1/2002/GV) (MNV-1)).